The chain runs to 152 residues: Ribosome maturation factor RimP (152 aa).

It belongs to the RimP family.

The protein resides in the cytoplasm. In terms of biological role, required for maturation of 30S ribosomal subunits. The polypeptide is Ribosome maturation factor RimP (Yersinia pestis).